Reading from the N-terminus, the 264-residue chain is 5'-nucleotidase SurE (264 aa).

A divalent metal cation is bound by residues Asp9, Asp10, Ser40, and Asn95.

It belongs to the SurE nucleotidase family. The cofactor is a divalent metal cation.

The protein localises to the cytoplasm. The enzyme catalyses a ribonucleoside 5'-phosphate + H2O = a ribonucleoside + phosphate. Nucleotidase that shows phosphatase activity on nucleoside 5'-monophosphates. The chain is 5'-nucleotidase SurE from Helicobacter hepaticus (strain ATCC 51449 / 3B1).